We begin with the raw amino-acid sequence, 204 residues long: Octanoyltransferase (204 aa).

The region spanning 27–202 is the BPL/LPL catalytic domain; sequence QGGEEALLLL…RFQPFLHLHL (176 aa). Substrate contacts are provided by residues 65–72, 132–134, and 145–147; these read RGGDVTYH, SIG, and GFA. Cys-163 functions as the Acyl-thioester intermediate in the catalytic mechanism.

Belongs to the LipB family.

The protein resides in the cytoplasm. It carries out the reaction octanoyl-[ACP] + L-lysyl-[protein] = N(6)-octanoyl-L-lysyl-[protein] + holo-[ACP] + H(+). Its pathway is protein modification; protein lipoylation via endogenous pathway; protein N(6)-(lipoyl)lysine from octanoyl-[acyl-carrier-protein]: step 1/2. Its function is as follows. Catalyzes the transfer of endogenously produced octanoic acid from octanoyl-acyl-carrier-protein onto the lipoyl domains of lipoate-dependent enzymes. Lipoyl-ACP can also act as a substrate although octanoyl-ACP is likely to be the physiological substrate. This is Octanoyltransferase from Geobacter sp. (strain M21).